Reading from the N-terminus, the 200-residue chain is Pyridoxine/pyridoxamine 5'-phosphate oxidase (200 aa).

FMN-binding positions include 48–53 (RMVLLK), 63–64 (YT), Lys70, and Gln92. Lys53 contributes to the substrate binding site. Residues Tyr110, Arg114, and Ser118 each contribute to the substrate site. Residues 127–128 (QS) and Trp171 contribute to the FMN site. 177–179 (RLH) contributes to the substrate binding site. Arg181 serves as a coordination point for FMN.

This sequence belongs to the pyridoxamine 5'-phosphate oxidase family. Homodimer. The cofactor is FMN.

The enzyme catalyses pyridoxamine 5'-phosphate + O2 + H2O = pyridoxal 5'-phosphate + H2O2 + NH4(+). It catalyses the reaction pyridoxine 5'-phosphate + O2 = pyridoxal 5'-phosphate + H2O2. Its pathway is cofactor metabolism; pyridoxal 5'-phosphate salvage; pyridoxal 5'-phosphate from pyridoxamine 5'-phosphate: step 1/1. The protein operates within cofactor metabolism; pyridoxal 5'-phosphate salvage; pyridoxal 5'-phosphate from pyridoxine 5'-phosphate: step 1/1. In terms of biological role, catalyzes the oxidation of either pyridoxine 5'-phosphate (PNP) or pyridoxamine 5'-phosphate (PMP) into pyridoxal 5'-phosphate (PLP). In Cereibacter sphaeroides (strain ATCC 17029 / ATH 2.4.9) (Rhodobacter sphaeroides), this protein is Pyridoxine/pyridoxamine 5'-phosphate oxidase.